The primary structure comprises 451 residues: uncharacterized protein (451 aa).

The region spanning 2–60 (NVVLKQRIPLKIKRMGINGEGIGFYKKTLIFVPGALKGEEVFCQISSVRRNFAEAKLLK) is the TRAM domain. Residues cysteine 73, cysteine 79, cysteine 82, and cysteine 162 each coordinate [4Fe-4S] cluster. Positions 283, 312, 333, and 381 each coordinate S-adenosyl-L-methionine. The Nucleophile role is filled by cysteine 408.

It belongs to the class I-like SAM-binding methyltransferase superfamily. RNA M5U methyltransferase family.

This is an uncharacterized protein from Streptococcus agalactiae serotype III (strain NEM316).